The chain runs to 197 residues: Small ribosomal subunit protein uS7 (197 aa).

The protein belongs to the universal ribosomal protein uS7 family. In terms of assembly, part of the 30S ribosomal subunit.

In terms of biological role, one of the primary rRNA binding proteins, it binds directly to 16S rRNA where it nucleates assembly of the head domain of the 30S subunit. Is located at the subunit interface close to the decoding center. The sequence is that of Small ribosomal subunit protein uS7 from Methanopyrus kandleri (strain AV19 / DSM 6324 / JCM 9639 / NBRC 100938).